Consider the following 417-residue polypeptide: MNRTYDIVIAGGGVIGASCAYQLSRRGNLRIAVVDDKRPGNATRASAGGLWAIGESVGLGCGVIFFRMMSSRNRREAQGAAVAVDASTPHILPPAFFDLALQSNALYPELHRELIERHGMDFKFERTGLKYVIQDDEDRQYAEHIVAQIPHLAEQVRWLDREELRRAEPAVSHAAHGALEFLCDHQVSPFRLADAYLEAARQNGVELLPGTNVTGVLRQGRRISGVRTDNAGVLHCRTLINAAGAWAAELSEMATGRRIPVKPVKGQIVLTERMPRLLNGCLTTSDCYMAQKDNGEILIGSTTEDKGFDVSNTFPEIAGLVQGAVRCVPELQQVNLKRTWAGLRPGSPDELPILGPVAEVEGYLNACGHFRTGILTSAITGVLLDRLVHEETLPLDIAPFLAARFQPEPAAVAVAAC.

An N-terminal signal peptide occupies residues 1-18 (MNRTYDIVIAGGGVIGAS). 7–21 (IVIAGGGVIGASCAY) contributes to the FAD binding site. Residue cysteine 19 is the site of N-palmitoyl cysteine attachment. Cysteine 19 carries S-diacylglycerol cysteine lipidation. Residues 46 to 66 (SAGGLWAIGESVGLGCGVIFF) traverse the membrane as a helical segment.

The protein belongs to the FAD-dependent glycerol-3-phosphate dehydrogenase family. As to quaternary structure, heterotrimer of HcnA, HcnB and HcnC. It depends on FAD as a cofactor.

Its subcellular location is the cell membrane. The enzyme catalyses glycine + 2 A = hydrogen cyanide + 2 AH2 + CO2. With respect to regulation, oxygen is necessary for cyanogenesis. Activated by succinate, glycine methyl ester, glucose and D,L-methionine in addition to glycine. Phenazine methosulfate, methylene blue, 2,6-dichlorophenolindophenol (DCIP) and ferricyanide can replace oxygen for the reaction. Inhibited by pyrrolnitrin and acriflavine at 1 mM concentration. Its function is as follows. A three-component membrane-bound flavoenzyme that catalyzes the formation of hydrogen cyanide, a secondary metabolite, by transfer of electrons to a cyanide-resistant branch of the aerobic respiratory chain. In Pseudomonas aeruginosa (strain ATCC 15692 / DSM 22644 / CIP 104116 / JCM 14847 / LMG 12228 / 1C / PRS 101 / PAO1), this protein is Hydrogen cyanide synthase subunit HcnC.